Reading from the N-terminus, the 212-residue chain is Ribosomal RNA small subunit methyltransferase G (212 aa).

Residues G72, L77, V123 to E124, and R138 each bind S-adenosyl-L-methionine.

Belongs to the methyltransferase superfamily. RNA methyltransferase RsmG family.

It localises to the cytoplasm. It carries out the reaction guanosine(527) in 16S rRNA + S-adenosyl-L-methionine = N(7)-methylguanosine(527) in 16S rRNA + S-adenosyl-L-homocysteine. In terms of biological role, specifically methylates the N7 position of guanine in position 527 of 16S rRNA. This is Ribosomal RNA small subunit methyltransferase G from Histophilus somni (strain 129Pt) (Haemophilus somnus).